Consider the following 148-residue polypeptide: UPF0179 protein Ta1159 (148 aa).

The protein belongs to the UPF0179 family.

This chain is UPF0179 protein Ta1159, found in Thermoplasma acidophilum (strain ATCC 25905 / DSM 1728 / JCM 9062 / NBRC 15155 / AMRC-C165).